The primary structure comprises 272 residues: Transcription factor E2F6 (272 aa).

Positions Met1–Pro62 are binding to corepressors. A DNA-binding region spans residues Tyr50–Ser129. A DEF box motif is present at residues Lys95–Ser129. The tract at residues Asp130–Val222 is dimerization. The interval Leu143–Cys164 is leucine-zipper. Residues Asp173–Gln272 are transcription repression. The tract at residues His242 to Gln272 is disordered.

This sequence belongs to the E2F/DP family. As to quaternary structure, forms heterodimers with DP family members TFDP1 or TFDP2. Component of the DRTF1/E2F transcription factor complex. Part of the E2F6.com-1 complex in G0 phase composed of E2F6, MGA, MAX, TFDP1, CBX3, BAT8, EUHMTASE1, RING1, RNF2, MBLR, L3MBTL2 and YAF2. Component of some MLL1/MLL complex, at least composed of the core components KMT2A/MLL1, ASH2L, HCFC1/HCF1, WDR5 and RBBP5, as well as the facultative components BACC1, CHD8, E2F6, HSP70, INO80C, KANSL1, LAS1L, MAX, MCRS1, MGA, KAT8/MOF, PELP1, PHF20, PRP31, RING2, RUVB1/TIP49A, RUVB2/TIP49B, SENP3, TAF1, TAF4, TAF6, TAF7, TAF9 and TEX10.

The protein resides in the nucleus. Inhibitor of E2F-dependent transcription. Binds DNA cooperatively with DP proteins through the E2 recognition site, 5'-TTTC[CG]CGC-3'. Has a preference for the 5'-TTTCCCGC-3' E2F recognition site. E2F6 lacks the transcriptional activation and pocket protein binding domains. Appears to regulate a subset of E2F-dependent genes whose products are required for entry into the cell cycle but not for normal cell cycle progression. Represses expression of some meiosis-specific genes, including SLC25A31/ANT4. May silence expression via the recruitment of a chromatin remodeling complex containing histone H3-K9 methyltransferase activity. Overexpression delays the exit of cells from the S-phase. This Mus musculus (Mouse) protein is Transcription factor E2F6.